A 215-amino-acid chain; its full sequence is Thiamine-phosphate synthase 1 (215 aa).

Residues 35-39 and Asn-67 each bind 4-amino-2-methyl-5-(diphosphooxymethyl)pyrimidine; that span reads QYRFE. Mg(2+) is bound by residues Asp-68 and Asp-87. Thr-106 provides a ligand contact to 4-amino-2-methyl-5-(diphosphooxymethyl)pyrimidine. 132-134 serves as a coordination point for 2-[(2R,5Z)-2-carboxy-4-methylthiazol-5(2H)-ylidene]ethyl phosphate; sequence TST. Lys-135 is a 4-amino-2-methyl-5-(diphosphooxymethyl)pyrimidine binding site. A 2-[(2R,5Z)-2-carboxy-4-methylthiazol-5(2H)-ylidene]ethyl phosphate-binding site is contributed by Gly-162.

Belongs to the thiamine-phosphate synthase family. It depends on Mg(2+) as a cofactor.

The enzyme catalyses 2-[(2R,5Z)-2-carboxy-4-methylthiazol-5(2H)-ylidene]ethyl phosphate + 4-amino-2-methyl-5-(diphosphooxymethyl)pyrimidine + 2 H(+) = thiamine phosphate + CO2 + diphosphate. It carries out the reaction 2-(2-carboxy-4-methylthiazol-5-yl)ethyl phosphate + 4-amino-2-methyl-5-(diphosphooxymethyl)pyrimidine + 2 H(+) = thiamine phosphate + CO2 + diphosphate. The catalysed reaction is 4-methyl-5-(2-phosphooxyethyl)-thiazole + 4-amino-2-methyl-5-(diphosphooxymethyl)pyrimidine + H(+) = thiamine phosphate + diphosphate. It functions in the pathway cofactor biosynthesis; thiamine diphosphate biosynthesis; thiamine phosphate from 4-amino-2-methyl-5-diphosphomethylpyrimidine and 4-methyl-5-(2-phosphoethyl)-thiazole: step 1/1. Functionally, condenses 4-methyl-5-(beta-hydroxyethyl)thiazole monophosphate (THZ-P) and 2-methyl-4-amino-5-hydroxymethyl pyrimidine pyrophosphate (HMP-PP) to form thiamine monophosphate (TMP). The polypeptide is Thiamine-phosphate synthase 1 (Aquifex aeolicus (strain VF5)).